Reading from the N-terminus, the 156-residue chain is Small ribosomal subunit protein uS7 (156 aa).

It belongs to the universal ribosomal protein uS7 family. As to quaternary structure, part of the 30S ribosomal subunit. Contacts proteins S9 and S11.

In terms of biological role, one of the primary rRNA binding proteins, it binds directly to 16S rRNA where it nucleates assembly of the head domain of the 30S subunit. Is located at the subunit interface close to the decoding center, probably blocks exit of the E-site tRNA. The sequence is that of Small ribosomal subunit protein uS7 from Anoxybacillus flavithermus (strain DSM 21510 / WK1).